Consider the following 380-residue polypeptide: Cytochrome b (380 aa).

The next 4 membrane-spanning stretches (helical) occupy residues 34-54, 78-99, 114-134, and 179-199; these read FGSL…LLAM, WLIR…YFHI, WNTG…GYVL, and FFAL…IHLT. His-84 and His-98 together coordinate heme b. The heme b site is built by His-183 and His-197. His-202 contributes to the a ubiquinone binding site. The next 4 helical transmembrane spans lie at 227–247, 289–309, 321–341, and 348–368; these read LKDI…ALFS, LGGV…PFLH, ISQL…WVGS, and FIII…VLFP.

This sequence belongs to the cytochrome b family. The cytochrome bc1 complex contains 11 subunits: 3 respiratory subunits (MT-CYB, CYC1 and UQCRFS1), 2 core proteins (UQCRC1 and UQCRC2) and 6 low-molecular weight proteins (UQCRH/QCR6, UQCRB/QCR7, UQCRQ/QCR8, UQCR10/QCR9, UQCR11/QCR10 and a cleavage product of UQCRFS1). This cytochrome bc1 complex then forms a dimer. Requires heme b as cofactor.

Its subcellular location is the mitochondrion inner membrane. Its function is as follows. Component of the ubiquinol-cytochrome c reductase complex (complex III or cytochrome b-c1 complex) that is part of the mitochondrial respiratory chain. The b-c1 complex mediates electron transfer from ubiquinol to cytochrome c. Contributes to the generation of a proton gradient across the mitochondrial membrane that is then used for ATP synthesis. In Pachyptila salvini (Salvin's prion), this protein is Cytochrome b (MT-CYB).